A 637-amino-acid chain; its full sequence is Chaperone protein HtpG (637 aa).

The interval 1–328 (MADIEELKFD…SSDLPLNISR (328 aa)) is a; substrate-binding. A b region spans residues 329–556 (ETLQNNRIVE…DNSMDIRMER (228 aa)). The segment at 488-508 (IGASDDSGDKTSEDSGESASD) is disordered. Residues 494–508 (SGDKTSEDSGESASD) show a composition bias toward basic and acidic residues. Residues 557 to 637 (FLREQKQLNY…GVLAKIFSSK (81 aa)) are c.

Belongs to the heat shock protein 90 family. Homodimer.

Its subcellular location is the cytoplasm. Its function is as follows. Molecular chaperone. Has ATPase activity. This chain is Chaperone protein HtpG, found in Anaplasma phagocytophilum (strain HZ).